The following is a 137-amino-acid chain: MLQPKRTKFRKQMTGHNRGLALRGSKVSFGEFALKSVARGRLTARQIESARRALTRHVKRGGKIWIRVFPDKPISKKPLEVRMGKGKGNVEYWVAQIQPGKVLYEIEGVSEELAREAFALAAAKLPLATSFVKRTVM.

The protein belongs to the universal ribosomal protein uL16 family. Part of the 50S ribosomal subunit.

Functionally, binds 23S rRNA and is also seen to make contacts with the A and possibly P site tRNAs. This Pseudomonas fluorescens (strain Pf0-1) protein is Large ribosomal subunit protein uL16.